A 551-amino-acid chain; its full sequence is Trehalose-6-phosphate hydrolase (551 aa).

D200 functions as the Nucleophile in the catalytic mechanism. E251 (proton donor) is an active-site residue.

Belongs to the glycosyl hydrolase 13 family.

Its subcellular location is the cytoplasm. It carries out the reaction alpha,alpha-trehalose 6-phosphate + H2O = D-glucose 6-phosphate + D-glucose. In terms of biological role, hydrolyzes trehalose-6-phosphate to glucose and glucose 6-phosphate. Can also very effectively hydrolyze p-nitrophenyl-alpha-D-glucopyranoside, but it does not recognize trehalose, sucrose, maltose, isomaltose, or maltodextrins. The sequence is that of Trehalose-6-phosphate hydrolase (treC) from Escherichia coli (strain K12).